The sequence spans 557 residues: Potassium-transporting ATPase potassium-binding subunit (557 aa).

12 helical membrane passes run 5–25, 63–83, 132–152, 170–190, 253–273, 283–303, 329–349, 356–376, 379–399, 416–436, 484–504, and 526–546; these read GFLL…PLGS, LCAI…MLLG, GLTV…FALI, LLRI…LFFI, FVQM…FGEV, LLWA…WAEV, VLVS…AVIA, ALGG…FGGV, GLYG…LMIG, LTAL…ALAM, LLAF…MAIA, and LFVG…FIPA.

It belongs to the KdpA family. The system is composed of three essential subunits: KdpA, KdpB and KdpC.

It is found in the cell inner membrane. In terms of biological role, part of the high-affinity ATP-driven potassium transport (or Kdp) system, which catalyzes the hydrolysis of ATP coupled with the electrogenic transport of potassium into the cytoplasm. This subunit binds the periplasmic potassium ions and delivers the ions to the membrane domain of KdpB through an intramembrane tunnel. The protein is Potassium-transporting ATPase potassium-binding subunit of Escherichia coli O157:H7.